The primary structure comprises 331 residues: Vacuolar protein sorting-associated protein 26B (331 aa).

A disordered region spans residues 310-331 (AAQRYEGSNPEPTSAQAKEETD).

The protein belongs to the VPS26 family. Component of the heterotrimeric retromer cargo-selective complex (CSC) which is believed to associate with variable sorting nexins to form functionally distinct retromer complex variants.

Its subcellular location is the cytoplasm. It is found in the membrane. It localises to the endosome. Its function is as follows. Acts as a component of the retromer cargo-selective complex (CSC). The CSC is believed to be the core functional component of retromer or respective retromer complex variants acting to prevent missorting of selected transmembrane cargo proteins into the lysosomal degradation pathway. Retromer mediates retrograde transport of cargo proteins from endosomes to the trans-Golgi network (TGN). This is Vacuolar protein sorting-associated protein 26B (vps26b) from Danio rerio (Zebrafish).